Reading from the N-terminus, the 145-residue chain is Mannitol-specific phosphotransferase enzyme IIA component (145 aa).

The PTS EIIA type-2 domain maps to 4–143 (TILSTETIKV…QEVLAFLGEV (140 aa)). The Tele-phosphohistidine intermediate role is filled by histidine 64. A Phosphohistidine; by HPr modification is found at histidine 64.

It localises to the cytoplasm. In terms of biological role, the phosphoenolpyruvate-dependent sugar phosphotransferase system (sugar PTS), a major carbohydrate active transport system, catalyzes the phosphorylation of incoming sugar substrates concomitantly with their translocation across the cell membrane. The enzyme II CmtAB PTS system is involved in D-mannitol transport. This chain is Mannitol-specific phosphotransferase enzyme IIA component (mtlF), found in Halalkalibacterium halodurans (strain ATCC BAA-125 / DSM 18197 / FERM 7344 / JCM 9153 / C-125) (Bacillus halodurans).